A 156-amino-acid chain; its full sequence is ATP synthase subunit b (156 aa).

The helical transmembrane segment at 5 to 27 (ITLIGQMITFAIFVGFTMKFVWP) threads the bilayer.

Belongs to the ATPase B chain family. F-type ATPases have 2 components, F(1) - the catalytic core - and F(0) - the membrane proton channel. F(1) has five subunits: alpha(3), beta(3), gamma(1), delta(1), epsilon(1). F(0) has three main subunits: a(1), b(2) and c(10-14). The alpha and beta chains form an alternating ring which encloses part of the gamma chain. F(1) is attached to F(0) by a central stalk formed by the gamma and epsilon chains, while a peripheral stalk is formed by the delta and b chains.

It localises to the cell inner membrane. Its function is as follows. F(1)F(0) ATP synthase produces ATP from ADP in the presence of a proton or sodium gradient. F-type ATPases consist of two structural domains, F(1) containing the extramembraneous catalytic core and F(0) containing the membrane proton channel, linked together by a central stalk and a peripheral stalk. During catalysis, ATP synthesis in the catalytic domain of F(1) is coupled via a rotary mechanism of the central stalk subunits to proton translocation. Functionally, component of the F(0) channel, it forms part of the peripheral stalk, linking F(1) to F(0). The sequence is that of ATP synthase subunit b from Francisella tularensis subsp. tularensis (strain WY96-3418).